The chain runs to 294 residues: Ribosomal RNA small subunit methyltransferase H (294 aa).

S-adenosyl-L-methionine-binding positions include G36–H38, D55, F82, D97, and Q104. The tract at residues K265 to W285 is disordered.

It belongs to the methyltransferase superfamily. RsmH family.

Its subcellular location is the cytoplasm. The catalysed reaction is cytidine(1402) in 16S rRNA + S-adenosyl-L-methionine = N(4)-methylcytidine(1402) in 16S rRNA + S-adenosyl-L-homocysteine + H(+). Specifically methylates the N4 position of cytidine in position 1402 (C1402) of 16S rRNA. This chain is Ribosomal RNA small subunit methyltransferase H, found in Synechococcus sp. (strain CC9902).